Here is a 458-residue protein sequence, read N- to C-terminus: Bifunctional protein GlmU (458 aa).

The tract at residues 1–229 (MKEKALSIVI…FMEVEGVNNR (229 aa)) is pyrophosphorylase. UDP-N-acetyl-alpha-D-glucosamine-binding positions include 11–14 (LAAG), Lys-25, Gln-76, 81–82 (GT), 103–105 (YGD), Gly-140, Glu-154, Asn-169, and Asn-227. Asp-105 contacts Mg(2+). Asn-227 provides a ligand contact to Mg(2+). The tract at residues 230–250 (QQLARLERYYQRKQADNLLLA) is linker. The N-acetyltransferase stretch occupies residues 251-458 (GVALADPERF…WQRPTKQTKK (208 aa)). UDP-N-acetyl-alpha-D-glucosamine-binding residues include Arg-333 and Lys-351. The Proton acceptor role is filled by His-363. Residues Tyr-366 and Asn-377 each coordinate UDP-N-acetyl-alpha-D-glucosamine. Residues Ala-380, 386–387 (NY), Ser-405, Ala-423, and Arg-440 each bind acetyl-CoA.

It in the N-terminal section; belongs to the N-acetylglucosamine-1-phosphate uridyltransferase family. The protein in the C-terminal section; belongs to the transferase hexapeptide repeat family. As to quaternary structure, homotrimer. Requires Mg(2+) as cofactor.

It is found in the cytoplasm. The enzyme catalyses alpha-D-glucosamine 1-phosphate + acetyl-CoA = N-acetyl-alpha-D-glucosamine 1-phosphate + CoA + H(+). It carries out the reaction N-acetyl-alpha-D-glucosamine 1-phosphate + UTP + H(+) = UDP-N-acetyl-alpha-D-glucosamine + diphosphate. It functions in the pathway nucleotide-sugar biosynthesis; UDP-N-acetyl-alpha-D-glucosamine biosynthesis; N-acetyl-alpha-D-glucosamine 1-phosphate from alpha-D-glucosamine 6-phosphate (route II): step 2/2. It participates in nucleotide-sugar biosynthesis; UDP-N-acetyl-alpha-D-glucosamine biosynthesis; UDP-N-acetyl-alpha-D-glucosamine from N-acetyl-alpha-D-glucosamine 1-phosphate: step 1/1. The protein operates within bacterial outer membrane biogenesis; LPS lipid A biosynthesis. Its function is as follows. Catalyzes the last two sequential reactions in the de novo biosynthetic pathway for UDP-N-acetylglucosamine (UDP-GlcNAc). The C-terminal domain catalyzes the transfer of acetyl group from acetyl coenzyme A to glucosamine-1-phosphate (GlcN-1-P) to produce N-acetylglucosamine-1-phosphate (GlcNAc-1-P), which is converted into UDP-GlcNAc by the transfer of uridine 5-monophosphate (from uridine 5-triphosphate), a reaction catalyzed by the N-terminal domain. The chain is Bifunctional protein GlmU from Pasteurella multocida (strain Pm70).